The following is a 1409-amino-acid chain: Inositol hexakisphosphate and diphosphoinositol-pentakisphosphate kinase 1 (1409 aa).

A substrate-binding site is contributed by 64 to 65 (KK). ATP-binding positions include Arg-145, Lys-198, His-205, Arg-224, 248–251 (EEFM), and 257–259 (DVK). 224-225 (RK) is a binding site for substrate. Substrate-binding residues include Lys-259 and Arg-273. Residues Ser-275, Asp-320, and 332 to 334 (DVN) contribute to the ATP site. 337-340 (SFVK) is a substrate binding site. A polyphosphoinositide-binding domain region spans residues 382-453 (PTTSGTMMEL…VLDITRLLLA (72 aa)). The disordered stretch occupies residues 891–996 (GVEEEGSAPA…PTEMKQSGLG (106 aa)). 2 positions are modified to phosphoserine: Ser-920 and Ser-963. The span at 981–996 (FSSSRPPTEMKQSGLG) shows a compositional bias: polar residues. Phosphoserine is present on residues Ser-1013 and Ser-1049. Over residues 1110 to 1119 (MHSSQASDNP) the composition is skewed to polar residues. The segment at 1110–1183 (MHSSQASDNP…PSLNSHVAEE (74 aa)) is disordered. A phosphoserine mark is found at Ser-1121 and Ser-1128. A compositionally biased stretch (low complexity) spans 1144–1162 (SSGPSSTVSSAGPSSPTTV). The segment covering 1163–1178 (DGNSQFGFSDQPSLNS) has biased composition (polar residues).

It belongs to the histidine acid phosphatase family. VIP1 subfamily.

It localises to the cytoplasm. The protein resides in the cytosol. It is found in the cell membrane. The enzyme catalyses 1D-myo-inositol hexakisphosphate + ATP = 1-diphospho-1D-myo-inositol 2,3,4,5,6-pentakisphosphate + ADP. It carries out the reaction 5-diphospho-1D-myo-inositol 1,2,3,4,6-pentakisphosphate + ATP + H(+) = 1,5-bis(diphospho)-1D-myo-inositol 2,3,4,6-tetrakisphosphate + ADP. Bifunctional inositol kinase that acts in concert with the IP6K kinases IP6K1, IP6K2 and IP6K3 to synthesize the diphosphate group-containing inositol pyrophosphates diphosphoinositol pentakisphosphate, PP-InsP5, and bis-diphosphoinositol tetrakisphosphate, (PP)2-InsP4. PP-InsP5 and (PP)2-InsP4, also respectively called InsP7 and InsP8, regulate a variety of cellular processes, including apoptosis, vesicle trafficking, cytoskeletal dynamics, exocytosis, insulin signaling and neutrophil activation. Phosphorylates inositol hexakisphosphate (InsP6) at position 1 to produce PP-InsP5 which is in turn phosphorylated by IP6Ks to produce (PP)2-InsP4. Alternatively, phosphorylates PP-InsP5 at position 1, produced by IP6Ks from InsP6, to produce (PP)2-InsP4. Activated when cells are exposed to hyperosmotic stress. The chain is Inositol hexakisphosphate and diphosphoinositol-pentakisphosphate kinase 1 from Pongo abelii (Sumatran orangutan).